The following is a 435-amino-acid chain: tRNA modification GTPase MnmE (435 aa).

Positions 20, 77, and 117 each coordinate (6S)-5-formyl-5,6,7,8-tetrahydrofolate. Residues Gly-214–His-359 enclose the TrmE-type G domain. Residues Asn-224–Ser-229, Thr-243–Thr-249, and Asp-268–Gly-271 each bind GTP. The Mg(2+) site is built by Ser-228 and Thr-249. A (6S)-5-formyl-5,6,7,8-tetrahydrofolate-binding site is contributed by Lys-435.

This sequence belongs to the TRAFAC class TrmE-Era-EngA-EngB-Septin-like GTPase superfamily. TrmE GTPase family. As to quaternary structure, homodimer. Heterotetramer of two MnmE and two MnmG subunits. It depends on K(+) as a cofactor.

It localises to the cytoplasm. Functionally, exhibits a very high intrinsic GTPase hydrolysis rate. Involved in the addition of a carboxymethylaminomethyl (cmnm) group at the wobble position (U34) of certain tRNAs, forming tRNA-cmnm(5)s(2)U34. In Bartonella tribocorum (strain CIP 105476 / IBS 506), this protein is tRNA modification GTPase MnmE.